The primary structure comprises 123 residues: Large ribosomal subunit protein uL14 (123 aa).

This sequence belongs to the universal ribosomal protein uL14 family. Part of the 50S ribosomal subunit. Forms a cluster with proteins L3 and L19. In the 70S ribosome, L14 and L19 interact and together make contacts with the 16S rRNA in bridges B5 and B8.

Binds to 23S rRNA. Forms part of two intersubunit bridges in the 70S ribosome. The protein is Large ribosomal subunit protein uL14 of Escherichia coli O139:H28 (strain E24377A / ETEC).